The sequence spans 757 residues: Mitofusin-2 (757 aa).

The Cytoplasmic portion of the chain corresponds to 1-604; it reads MSLLFSRCNS…TQEEFMVSMV (604 aa). The tract at residues 30–94 is part of a helix bundle domain, formed by helices from N-terminal and C-terminal regions; that stretch reads KHFVTAKKKI…VRGISEVLAR (65 aa). One can recognise a Dynamin-type G domain in the interval 93 to 342; sequence ARRHMKVAFF…VRMFEFQNFE (250 aa). Residues 103 to 110 form a G1 motif region; it reads GRTSNGKS. GTP is bound at residue 106–111; sequence SNGKST. A Phosphothreonine; by PINK1 modification is found at Thr-111. Positions 129–130 are G2 motif; it reads TT. Residues 199–202 form a G3 motif region; the sequence is DSPG. 258–261 lines the GTP pocket; it reads NRWD. A G4 motif region spans residues 258–261; that stretch reads NRWD. Position 288 (Glu-288) is a region of interest, G5 motif. 2 residues coordinate GTP: Ser-305 and Lys-307. The part of a helix bundle domain, formed by helices from N-terminal and C-terminal regions stretch occupies residues 359-385; the sequence is EQHTVRAKQIAEAVRLIMDSLHMAARE. A coiled-coil region spans residues 391 to 434; sequence EEMREERQDRLKFIDKQLELLAQDYKLRIKQITEEVERQVSTAM. At Ser-442 the chain carries Phosphoserine; by PINK1. The helical transmembrane segment at 605 to 625 threads the bilayer; that stretch reads TGLASLTSRTSMGILVVGGVV. Trp-626 is a topological domain (mitochondrial intermembrane). A helical transmembrane segment spans residues 627 to 647; it reads KAVGWRLIALSFGLYGLLYVY. The Cytoplasmic segment spans residues 648 to 757; sequence ERLTWTTKAK…FTHQYLQPSR (110 aa). Positions 695–738 form a coiled coil; it reads TFAHLCQQVDVTRENLEQEIAAMNKKIEVLDSLQSKAKLLRNKA. The interval 722 to 753 is part of a helix bundle domain, formed by helices from N-terminal and C-terminal regions; it reads EVLDSLQSKAKLLRNKAGWLDSELNMFTHQYL.

The protein belongs to the TRAFAC class dynamin-like GTPase superfamily. Dynamin/Fzo/YdjA family. Mitofusin subfamily. Forms homomultimers and heteromultimers with MFN1. Oligomerization is essential for mitochondrion fusion. Interacts with VAT1. Interacts with STOML2; may form heterooligomers. Interacts (phosphorylated) with PRKN. Interacts with EIF2AK3. Interacts with THG1L; THG1L probably functions as a guanyl-nucleotide exchange factor/GEF, activating MFN2. Phosphorylated by PINK1. Post-translationally, ubiquitinated by non-degradative ubiquitin by PRKN, promoting mitochondrial fusion; deubiquitination by USP30 inhibits mitochondrial fusion. Ubiquitinated by HUWE1 when dietary stearate (C18:0) levels are low; ubiquitination inhibits mitochondrial fusion. In terms of tissue distribution, ubiquitous; expressed at low level. Highly expressed in heart and kidney.

The protein localises to the mitochondrion outer membrane. It catalyses the reaction GTP + H2O = GDP + phosphate + H(+). In terms of biological role, mitochondrial outer membrane GTPase that mediates mitochondrial clustering and fusion. Mitochondria are highly dynamic organelles, and their morphology is determined by the equilibrium between mitochondrial fusion and fission events. Overexpression induces the formation of mitochondrial networks. Membrane clustering requires GTPase activity and may involve a major rearrangement of the coiled coil domains. Plays a central role in mitochondrial metabolism and may be associated with obesity and/or apoptosis processes. Plays an important role in the regulation of vascular smooth muscle cell proliferation. Involved in the clearance of damaged mitochondria via selective autophagy (mitophagy). Is required for PRKN recruitment to dysfunctional mitochondria. Involved in the control of unfolded protein response (UPR) upon ER stress including activation of apoptosis and autophagy during ER stress. Acts as an upstream regulator of EIF2AK3 and suppresses EIF2AK3 activation under basal conditions. This chain is Mitofusin-2, found in Homo sapiens (Human).